Here is a 315-residue protein sequence, read N- to C-terminus: Cytochrome c biogenesis protein CcsA (315 aa).

The next 7 helical transmembrane spans lie at 14–34 (VVSL…ISFW), 72–92 (ISNL…AQLF), 101–121 (IVSA…SFVL), 146–166 (VIMC…GVFL), 221–241 (SITA…VWAN), 255–272 (TWAL…HTRL), and 282–302 (AILA…VNLL).

Belongs to the CcmF/CycK/Ccl1/NrfE/CcsA family. In terms of assembly, may interact with ccs1.

It is found in the cellular thylakoid membrane. In terms of biological role, required during biogenesis of c-type cytochromes (cytochrome c6 and cytochrome f) at the step of heme attachment. This Prochlorococcus marinus (strain NATL1A) protein is Cytochrome c biogenesis protein CcsA.